A 302-amino-acid chain; its full sequence is Heme A synthase (302 aa).

The Cytoplasmic portion of the chain corresponds to 1 to 8; that stretch reads MFSKKNLK. Residues 9 to 29 form a helical membrane-spanning segment; the sequence is WLSVLATVIMAFVQLGGALVT. The Extracellular portion of the chain corresponds to 30 to 67; sequence KTGSADGCGSDWPLCHGAFLPQNLPIQTLIELSHRAVS. Residues Cys37 and Cys44 are joined by a disulfide bond. Glu60 is an active-site residue. Residue His63 coordinates heme o. Residues 68–88 form a helical membrane-spanning segment; it reads GLSLIVVLWLVIVAWKHIGYI. Over 89-93 the chain is Cytoplasmic; it reads KEVKP. A helical membrane pass occupies residues 94-114; the sequence is LSCISVGFLLIQALVGAAAVM. Residues 115–122 are Extracellular-facing; that stretch reads WQQNAYVL. A helical transmembrane segment spans residues 123-143; it reads ALHFGISLISFSSVFVLTLII. Heme o is bound at residue His125. Over 144 to 161 the chain is Cytoplasmic; it reads YEVDRKYEADELFIRKPL. A helical transmembrane segment spans residues 162-182; the sequence is RIYTWIMALIVYMTIYTGALV. Residues 183-215 are Extracellular-facing; it reads RHKEASLAYGQWPLPFNDLMPHNVQDWVNLTHR. Heme b is bound at residue His214. Residues 216 to 236 form a helical membrane-spanning segment; it reads GMALIAFIWILITFIHAVNNY. Residues 237–244 lie on the Cytoplasmic side of the membrane; sequence RENRTIRY. Residues 245-265 traverse the membrane as a helical segment; sequence GYTAAFILVILQVTTGALSII. The Extracellular segment spans residues 266-271; it reads TEVNLF. A helical transmembrane segment spans residues 272 to 292; it reads IALLHALFITLLFGLIAYFII. A heme b-binding site is contributed by His276. The Cytoplasmic portion of the chain corresponds to 293–302; the sequence is LMLRTIRSGG.

It belongs to the COX15/CtaA family. Type 1 subfamily. In terms of assembly, interacts with CtaB. Heme b serves as cofactor.

The protein localises to the cell membrane. The catalysed reaction is Fe(II)-heme o + 2 A + H2O = Fe(II)-heme a + 2 AH2. Its pathway is porphyrin-containing compound metabolism; heme A biosynthesis; heme A from heme O: step 1/1. Its function is as follows. Catalyzes the conversion of heme O to heme A by two successive hydroxylations of the methyl group at C8. The first hydroxylation forms heme I, the second hydroxylation results in an unstable dihydroxymethyl group, which spontaneously dehydrates, resulting in the formyl group of heme A. The polypeptide is Heme A synthase (Staphylococcus saprophyticus subsp. saprophyticus (strain ATCC 15305 / DSM 20229 / NCIMB 8711 / NCTC 7292 / S-41)).